The primary structure comprises 351 residues: Modulator of apoptosis 1 (351 aa).

Residues tyrosine 49–leucine 52 carry the LIR motif. The tract at residues leucine 120–glutamate 127 is BH3-like. The RASSF1-binding stretch occupies residues lysine 202–arginine 205.

It belongs to the PNMA family. In terms of assembly, homodimer. Under normal circumstances, held in an inactive conformation by an intramolecular interaction. Interacts with BAX. Binding to RASSF1 isoform A (RASSF1A) relieves this inhibitory interaction and allows further binding to BAX. Also binds to BCL2 and BCLX. Recruited to the TNFRSF1A and TNFRSF10A complexes in response to their respective cognate ligand, after internalization. Interacts with TRIM39. Interacts with RASSF6. Interacts with ATG8 proteins MAP1LC3A, MAP1LC3B and MAP1LC3C. Does not interact with ATG8 proteins GABARAPL1, GABARAPL2 and GABARAP. Interacts with SQSTM1; promoting dissociation of SQSTM1 inclusion bodies that sequester KEAP1. In terms of processing, ubiquitinated and degraded during mitotic exit by APC/C-Cdh1, this modification is inhibited by TRIM39.

The protein localises to the cytoplasm. It is found in the cytosol. It localises to the mitochondrion outer membrane. Its subcellular location is the extracellular vesicle membrane. In terms of biological role, retrotransposon-derived protein that forms virion-like capsids. Acts as an effector of BAX during apoptosis: enriched at outer mitochondria membrane and associates with BAX upon induction of apoptosis, facilitating BAX-dependent mitochondrial outer membrane permeabilization and apoptosis. Required for death receptor-dependent apoptosis. When associated with RASSF1, promotes BAX conformational change and translocation to mitochondrial membranes in response to TNF and TNFSF10 stimulation. Also promotes autophagy: promotes phagophore closure via association with ATG8 proteins. Acts as an inhibitor of the NFE2L2/NRF2 pathway via interaction with SQSTM1: interaction promotes dissociation of SQSTM1 inclusion bodies that sequester KEAP1, relieving inactivation of the BCR(KEAP1) complex. This Macaca fascicularis (Crab-eating macaque) protein is Modulator of apoptosis 1.